A 209-amino-acid chain; its full sequence is MIAIIDYGMGNIRSVEQALKHIGAAYIVTSDKEEIFRSDGVILPGVGAFPKAMDVLEEKDLVRVLQEIGRSRKPLLGICLGMQLLFEKSEELQDCNGLSLLPGVIRKLKVPYKIPHMGWNELKKEGEIALWNGVEDGSFVYYVHSYYADCPNEIVYGISEYGVKVPGFVAKGNIYGAQFHPEKSGDIGMQMLKNFKGVVETWKSSQLSI.

The region spanning 1-205 (MIAIIDYGMG…KGVVETWKSS (205 aa)) is the Glutamine amidotransferase type-1 domain. Cys79 functions as the Nucleophile in the catalytic mechanism. Active-site residues include His180 and Glu182.

In terms of assembly, heterodimer of HisH and HisF.

The protein resides in the cytoplasm. It carries out the reaction 5-[(5-phospho-1-deoxy-D-ribulos-1-ylimino)methylamino]-1-(5-phospho-beta-D-ribosyl)imidazole-4-carboxamide + L-glutamine = D-erythro-1-(imidazol-4-yl)glycerol 3-phosphate + 5-amino-1-(5-phospho-beta-D-ribosyl)imidazole-4-carboxamide + L-glutamate + H(+). The enzyme catalyses L-glutamine + H2O = L-glutamate + NH4(+). The protein operates within amino-acid biosynthesis; L-histidine biosynthesis; L-histidine from 5-phospho-alpha-D-ribose 1-diphosphate: step 5/9. IGPS catalyzes the conversion of PRFAR and glutamine to IGP, AICAR and glutamate. The HisH subunit catalyzes the hydrolysis of glutamine to glutamate and ammonia as part of the synthesis of IGP and AICAR. The resulting ammonia molecule is channeled to the active site of HisF. The chain is Imidazole glycerol phosphate synthase subunit HisH from Bacillus cereus (strain AH187).